We begin with the raw amino-acid sequence, 247 residues long: E3 SUMO-protein ligase NSE2 (247 aa).

At Met1 the chain carries N-acetylmethionine. Residues Lys90 and Lys107 each participate in a glycyl lysine isopeptide (Lys-Gly) (interchain with G-Cter in SUMO2) cross-link. Ser116 is subject to Phosphoserine. Glycyl lysine isopeptide (Lys-Gly) (interchain with G-Cter in SUMO2) cross-links involve residues Lys125 and Lys130. The SP-RING-type zinc finger occupies 154-240 (MDEDMIVTQS…LRRAIESHNK (87 aa)). Residues Cys185, His187, Cys210, and Cys215 each contribute to the Zn(2+) site.

The protein belongs to the NSE2 family. Component of the SMC5-SMC6 complex which consists at least of SMC5, SMC6, NSMCE2, NSMCE1, NSMCE4A or EID3 and NSMCE3. In terms of processing, sumoylated, possibly via autosumoylation.

The protein resides in the nucleus. Its subcellular location is the chromosome. It is found in the telomere. The protein localises to the PML body. The protein operates within protein modification; protein sumoylation. Its function is as follows. E3 SUMO-protein ligase component of the SMC5-SMC6 complex, a complex involved in DNA double-strand break repair by homologous recombination. Is not be required for the stability of the complex. The complex may promote sister chromatid homologous recombination by recruiting the SMC1-SMC3 cohesin complex to double-strand breaks. Acts as an E3 ligase mediating SUMO attachment to various proteins such as SMC6L1 and TSNAX, the shelterin complex subunits TERF1, TERF2, TINF2 and TERF2IP, RAD51AP1, and maybe the cohesin components RAD21 and STAG2. Required for recruitment of telomeres to PML nuclear bodies. Required for sister chromatid cohesion during prometaphase and mitotic progression. This chain is E3 SUMO-protein ligase NSE2 (Nsmce2), found in Rattus norvegicus (Rat).